The sequence spans 64 residues: Large ribosomal subunit protein bL35 (64 aa).

Positions 1-17 (MKQKTHSGIKKRIKKTG) are enriched in basic residues. The interval 1-64 (MKQKTHSGIK…KRVNRLLGEG (64 aa)) is disordered. The segment covering 21–33 (LRREQANRRHLLE) has biased composition (basic and acidic residues).

Belongs to the bacterial ribosomal protein bL35 family.

This chain is Large ribosomal subunit protein bL35, found in Corynebacterium kroppenstedtii (strain DSM 44385 / JCM 11950 / CIP 105744 / CCUG 35717).